The sequence spans 240 residues: Sialidase 85-1.2 (240 aa).

A compositionally biased stretch (acidic residues) spans 127 to 142 (DDDDGGDDDDEEDSQE). Disordered stretches follow at residues 127-158 (DDDD…GKKP) and 221-240 (HRGG…QRDA). Over residues 144-155 (SSPKESSPEKIG) the composition is skewed to basic and acidic residues.

Belongs to the glycosyl hydrolase 33 family.

It catalyses the reaction Hydrolysis of alpha-(2-&gt;3)-, alpha-(2-&gt;6)-, alpha-(2-&gt;8)- glycosidic linkages of terminal sialic acid residues in oligosaccharides, glycoproteins, glycolipids, colominic acid and synthetic substrates.. In terms of biological role, developmentally regulated neuraminidase implicated in parasite invasion of cells. May contribute to the pathology during T.cruzi infection by cleaving sialic acid from cells of the immune system. The chain is Sialidase 85-1.2 (SA85-1.2) from Trypanosoma cruzi.